Consider the following 88-residue polypeptide: MIKNIVISFEEQKEESRGSVEFQVFSFTNKIRRLTSHLELHRKDYLSQRGLRKILGKRQRLLAYLSKKNRVRYKELINQLNIRELKTR.

This sequence belongs to the universal ribosomal protein uS15 family. Part of the 30S ribosomal subunit.

The protein resides in the plastid. The protein localises to the chloroplast. This is Small ribosomal subunit protein uS15c (rps15) from Arabidopsis thaliana (Mouse-ear cress).